Reading from the N-terminus, the 296-residue chain is ATP synthase gamma chain (296 aa).

The protein belongs to the ATPase gamma chain family. As to quaternary structure, F-type ATPases have 2 components, CF(1) - the catalytic core - and CF(0) - the membrane proton channel. CF(1) has five subunits: alpha(3), beta(3), gamma(1), delta(1), epsilon(1). CF(0) has three main subunits: a, b and c.

The protein localises to the cell inner membrane. Its function is as follows. Produces ATP from ADP in the presence of a proton gradient across the membrane. The gamma chain is believed to be important in regulating ATPase activity and the flow of protons through the CF(0) complex. In Rhodopirellula baltica (strain DSM 10527 / NCIMB 13988 / SH1), this protein is ATP synthase gamma chain.